A 283-amino-acid chain; its full sequence is 4-diphosphocytidyl-2-C-methyl-D-erythritol kinase (283 aa).

Lysine 12 is an active-site residue. Residue 99 to 109 (PLAAGIGGGSA) participates in ATP binding. The active site involves aspartate 141.

The protein belongs to the GHMP kinase family. IspE subfamily.

It catalyses the reaction 4-CDP-2-C-methyl-D-erythritol + ATP = 4-CDP-2-C-methyl-D-erythritol 2-phosphate + ADP + H(+). It functions in the pathway isoprenoid biosynthesis; isopentenyl diphosphate biosynthesis via DXP pathway; isopentenyl diphosphate from 1-deoxy-D-xylulose 5-phosphate: step 3/6. Functionally, catalyzes the phosphorylation of the position 2 hydroxy group of 4-diphosphocytidyl-2C-methyl-D-erythritol. This chain is 4-diphosphocytidyl-2-C-methyl-D-erythritol kinase, found in Sphingopyxis alaskensis (strain DSM 13593 / LMG 18877 / RB2256) (Sphingomonas alaskensis).